The following is a 134-amino-acid chain: Small ribosomal subunit protein bS6 (134 aa).

Over residues 113 to 122 (NKDIKEKEQP) the composition is skewed to basic and acidic residues. Residues 113–134 (NKDIKEKEQPSESNVDADLKVN) are disordered.

Belongs to the bacterial ribosomal protein bS6 family.

Binds together with bS18 to 16S ribosomal RNA. The chain is Small ribosomal subunit protein bS6 from Borrelia recurrentis (strain A1).